The sequence spans 760 residues: Protein HEADING DATE 3B (760 aa).

Gly residues-rich tracts occupy residues 1–12 (MATRGGGGGGGG) and 60–70 (SGGGGGGGVGG). Disordered stretches follow at residues 1–120 (MATR…KINK), 144–169 (SRSTAEAPQRRAENTIKSSSGKRLAD), 236–262 (VKSRTPLKDKEMEAAQTSKNVEVEKSS), and 285–346 (TGII…IEET). A compositionally biased stretch (low complexity) spans 71 to 87 (SPAHSTSAASQSQSQSQ). The segment covering 94 to 107 (SLFQPFNVPSNRPG) has biased composition (polar residues). Positions 108–120 (HSTEKINSDKINK) are enriched in basic and acidic residues. Positions 236–248 (VKSRTPLKDKEME) are enriched in basic and acidic residues. The Nuclear localization signal signature appears at 349-355 (KRKRLLE). Disordered regions lie at residues 485-543 (LQQP…GVQL) and 707-760 (FPTV…QRDD). Composition is skewed to polar residues over residues 511–522 (QRDQAATNGVSK), 531–543 (ASDNKQNNWGVQL), and 707–730 (FPTVSAQNNQPQPSYSSRDNQTNV).

Expressed in mesophyll cells of young leaves, anthers, stigmas and the top of lemmas.

The protein resides in the nucleus. In terms of biological role, involved in the regulation of flowering time under short day (SD) and long day (LD) conditions. Functions as a floral promoter by negatively regulating GHD7, a repressor of the photoperiodic control of flowering. Acts as a floral activator in the LD photoperiodic pathway. Involved in blue light-induced activation of EHD1 expression to promote flowering under SD conditions. This is Protein HEADING DATE 3B (HD3B) from Oryza sativa subsp. japonica (Rice).